Consider the following 518-residue polypeptide: Phytoene desaturase (neurosporene-forming) (518 aa).

Residue 14 to 47 (LVIGSGLGGLAAAMRLGAKGWRVTVIDKLDVPGG) coordinates FAD.

Belongs to the carotenoid/retinoid oxidoreductase family. FAD serves as cofactor.

It catalyses the reaction 15-cis-phytoene + 3 A = all-trans-neurosporene + 3 AH2. The protein operates within carotenoid biosynthesis. In terms of biological role, converts phytoene into all-trans-neurosporene as the major product, via the intermediary of phytofluene and zeta-carotene, by the introduction of three double bonds. The sequence is that of Phytoene desaturase (neurosporene-forming) (crtI) from Cereibacter sphaeroides (strain ATCC 17023 / DSM 158 / JCM 6121 / CCUG 31486 / LMG 2827 / NBRC 12203 / NCIMB 8253 / ATH 2.4.1.) (Rhodobacter sphaeroides).